Here is a 456-residue protein sequence, read N- to C-terminus: Exodeoxyribonuclease 7 large subunit (456 aa).

This sequence belongs to the XseA family. Heterooligomer composed of large and small subunits.

The protein resides in the cytoplasm. It carries out the reaction Exonucleolytic cleavage in either 5'- to 3'- or 3'- to 5'-direction to yield nucleoside 5'-phosphates.. Bidirectionally degrades single-stranded DNA into large acid-insoluble oligonucleotides, which are then degraded further into small acid-soluble oligonucleotides. The chain is Exodeoxyribonuclease 7 large subunit from Escherichia coli (strain ATCC 8739 / DSM 1576 / NBRC 3972 / NCIMB 8545 / WDCM 00012 / Crooks).